A 342-amino-acid chain; its full sequence is MKIKVGILGASGYAGNELVRILLNHPKVEISYLGSSSSVGQNYQDLYPNTPLNLCFENKNLDELELDLLFLATPHEFSAKLLNENLLKKMKIIDLSADFRLKNPKDYELWYKFTHPNQELLQNAVYGLCELYKEEIKKASLVANPGCYTTCSILSLYPLFKEKIIDFSSVIIDAKSGVSGAGRSAKVENLFCEVNENIKAYNLALHRHTPEIEEHLSYAAKKKITLQFTPHLVSMQRGILISAYANLKEDLQEQDIRDIYTKYYQNNKFIRLLPPQSLPQTRWVKSSNFADINFSVDQRTKRVIVLGAIDNLIKGAAGQAVQNMNLMFDFDEDEGLKFFANL.

C147 is an active-site residue.

The protein belongs to the NAGSA dehydrogenase family. Type 1 subfamily.

Its subcellular location is the cytoplasm. The enzyme catalyses N-acetyl-L-glutamate 5-semialdehyde + phosphate + NADP(+) = N-acetyl-L-glutamyl 5-phosphate + NADPH + H(+). The protein operates within amino-acid biosynthesis; L-arginine biosynthesis; N(2)-acetyl-L-ornithine from L-glutamate: step 3/4. Its function is as follows. Catalyzes the NADPH-dependent reduction of N-acetyl-5-glutamyl phosphate to yield N-acetyl-L-glutamate 5-semialdehyde. This Campylobacter jejuni (strain RM1221) protein is N-acetyl-gamma-glutamyl-phosphate reductase.